Here is a 585-residue protein sequence, read N- to C-terminus: Pyruvate kinase (585 aa).

A substrate-binding site is contributed by Arg32. The K(+) site is built by Asn34, Ser36, Asp66, and Thr67. Residue 34-37 coordinates ATP; the sequence is NFSH. Positions 73 and 156 each coordinate ATP. Glu221 serves as a coordination point for Mg(2+). 3 residues coordinate substrate: Gly244, Asp245, and Thr277. Position 245 (Asp245) interacts with Mg(2+).

This sequence belongs to the pyruvate kinase family. In the C-terminal section; belongs to the PEP-utilizing enzyme family. Mg(2+) is required as a cofactor. It depends on K(+) as a cofactor.

It carries out the reaction pyruvate + ATP = phosphoenolpyruvate + ADP + H(+). It participates in carbohydrate degradation; glycolysis; pyruvate from D-glyceraldehyde 3-phosphate: step 5/5. The protein is Pyruvate kinase (pyk) of Staphylococcus epidermidis (strain ATCC 35984 / DSM 28319 / BCRC 17069 / CCUG 31568 / BM 3577 / RP62A).